The primary structure comprises 336 residues: NADH-quinone oxidoreductase subunit H (336 aa).

8 consecutive transmembrane segments (helical) span residues 14-34 (IIVA…AFLV), 82-102 (IIFL…WAVI), 115-135 (VGIL…IMAG), 161-181 (IGLV…SDVV), 186-206 (TVWF…SALA), 247-267 (ILMS…PLDV), 273-293 (VPGP…FVWV), and 312-332 (VFLP…VTFD).

Belongs to the complex I subunit 1 family. As to quaternary structure, NDH-1 is composed of 14 different subunits. Subunits NuoA, H, J, K, L, M, N constitute the membrane sector of the complex.

It localises to the cell inner membrane. It carries out the reaction a quinone + NADH + 5 H(+)(in) = a quinol + NAD(+) + 4 H(+)(out). NDH-1 shuttles electrons from NADH, via FMN and iron-sulfur (Fe-S) centers, to quinones in the respiratory chain. The immediate electron acceptor for the enzyme in this species is believed to be ubiquinone. Couples the redox reaction to proton translocation (for every two electrons transferred, four hydrogen ions are translocated across the cytoplasmic membrane), and thus conserves the redox energy in a proton gradient. This subunit may bind ubiquinone. The polypeptide is NADH-quinone oxidoreductase subunit H (Rhodospirillum centenum (strain ATCC 51521 / SW)).